The sequence spans 291 residues: Ribosomal RNA small subunit methyltransferase I (291 aa).

Belongs to the methyltransferase superfamily. RsmI family.

It is found in the cytoplasm. It carries out the reaction cytidine(1402) in 16S rRNA + S-adenosyl-L-methionine = 2'-O-methylcytidine(1402) in 16S rRNA + S-adenosyl-L-homocysteine + H(+). Functionally, catalyzes the 2'-O-methylation of the ribose of cytidine 1402 (C1402) in 16S rRNA. The polypeptide is Ribosomal RNA small subunit methyltransferase I (Neisseria meningitidis serogroup B (strain ATCC BAA-335 / MC58)).